We begin with the raw amino-acid sequence, 430 residues long: Arrestin-related trafficking adapter 10 (430 aa).

A disordered region spans residues 55-75 (AEADRHSSRLPQDPQTQYTKE). Over residues 63–72 (RLPQDPQTQY) the composition is skewed to polar residues.

This sequence belongs to the ART10 family.

It localises to the cytoplasm. In terms of biological role, may regulate endocytosis by recruiting RSP5 ubiquitin ligase activity to specific plasma membrane proteins in response to extracellular stimuli. The sequence is that of Arrestin-related trafficking adapter 10 (ART10) from Eremothecium gossypii (strain ATCC 10895 / CBS 109.51 / FGSC 9923 / NRRL Y-1056) (Yeast).